The primary structure comprises 385 residues: Acetate kinase (385 aa).

Mg(2+) is bound at residue Asn-9. Lys-16 serves as a coordination point for ATP. A substrate-binding site is contributed by Arg-75. Asp-132 (proton donor/acceptor) is an active-site residue. ATP-binding positions include 192–196, 266–268, and 314–318; these read HLGNG, DFR, and GIGEN. Glu-368 serves as a coordination point for Mg(2+).

This sequence belongs to the acetokinase family. As to quaternary structure, homodimer. It depends on Mg(2+) as a cofactor. Mn(2+) is required as a cofactor.

The protein localises to the cytoplasm. The catalysed reaction is acetate + ATP = acetyl phosphate + ADP. Its pathway is metabolic intermediate biosynthesis; acetyl-CoA biosynthesis; acetyl-CoA from acetate: step 1/2. In terms of biological role, catalyzes the formation of acetyl phosphate from acetate and ATP. Can also catalyze the reverse reaction. The polypeptide is Acetate kinase (Mycobacterium bovis (strain ATCC BAA-935 / AF2122/97)).